The primary structure comprises 388 residues: Mannosyl-3-phosphoglycerate synthase (388 aa).

This sequence belongs to the glycosyltransferase 2 family.

Its subcellular location is the cytoplasm. It catalyses the reaction (2R)-3-phosphoglycerate + GDP-alpha-D-mannose = 2-O-(alpha-D-mannosyl)-3-phosphoglycerate + GDP + H(+). It functions in the pathway carbohydrate biosynthesis; 2-(alpha-D-mannosyl)-D-glycerate biosynthesis; 2-(alpha-D-mannosyl)-D-glycerate from GDP-alpha-D-mannose (MPG route): step 1/2. Transfers a mannosyl group from GDP-mannose to phosphoglycerate to form mannosyl-3-phosphoglycerate (MPG). This Aeropyrum pernix (strain ATCC 700893 / DSM 11879 / JCM 9820 / NBRC 100138 / K1) protein is Mannosyl-3-phosphoglycerate synthase (mngA).